A 197-amino-acid polypeptide reads, in one-letter code: Ribonuclease HII (197 aa).

The RNase H type-2 domain maps to 9 to 197 (KLIAGVDEVG…APVKKALEQF (189 aa)). Positions 15, 16, and 107 each coordinate a divalent metal cation.

It belongs to the RNase HII family. Requires Mn(2+) as cofactor. It depends on Mg(2+) as a cofactor.

The protein localises to the cytoplasm. It catalyses the reaction Endonucleolytic cleavage to 5'-phosphomonoester.. In terms of biological role, endonuclease that specifically degrades the RNA of RNA-DNA hybrids. This is Ribonuclease HII (rnhB) from Haemophilus influenzae (strain ATCC 51907 / DSM 11121 / KW20 / Rd).